A 571-amino-acid polypeptide reads, in one-letter code: Cytochrome P450 monooxygenase g430 (571 aa).

A helical membrane pass occupies residues 8–28 (GALIWVVTSYILYAIISNFII). C471 lines the heme pocket. Residues 552–571 (CPLPAEAKLPKSRKPIGTAS) are disordered.

The protein belongs to the cytochrome P450 family. Requires heme as cofactor.

Its subcellular location is the membrane. Its pathway is mycotoxin biosynthesis. In terms of biological role, cytochrome P450 monooxygenase; part of the gene cluster that mediates the biosynthesis of 1233A, a natural compound known as an inhibitor of HMG-CoA synthase in the mevalonate pathway and with antibacterial and antifungal activities. The highly reducing polyketide synthase g433 is responsible for the 1233A backbone biosynthesis and the cytochrome P450 monooxygenase g430 catalyzes oxidation of the backbone. In Fusarium sp, this protein is Cytochrome P450 monooxygenase g430.